A 432-amino-acid chain; its full sequence is Adenylosuccinate synthetase (432 aa).

GTP contacts are provided by residues 12–18 (GDEGKGK) and 40–42 (GHT). The active-site Proton acceptor is the aspartate 13. Residues aspartate 13 and glycine 40 each coordinate Mg(2+). IMP contacts are provided by residues 13–16 (DEGK), 38–41 (NAGH), threonine 129, arginine 143, glutamine 224, threonine 239, and arginine 303. Catalysis depends on histidine 41, which acts as the Proton donor. Residue 299 to 305 (VTTGRRR) coordinates substrate. Residues arginine 305, 331-333 (KLD), and 413-415 (GVG) each bind GTP.

This sequence belongs to the adenylosuccinate synthetase family. Homodimer. The cofactor is Mg(2+).

The protein localises to the cytoplasm. The catalysed reaction is IMP + L-aspartate + GTP = N(6)-(1,2-dicarboxyethyl)-AMP + GDP + phosphate + 2 H(+). It participates in purine metabolism; AMP biosynthesis via de novo pathway; AMP from IMP: step 1/2. In terms of biological role, plays an important role in the de novo pathway of purine nucleotide biosynthesis. Catalyzes the first committed step in the biosynthesis of AMP from IMP. This is Adenylosuccinate synthetase from Mycolicibacterium paratuberculosis (strain ATCC BAA-968 / K-10) (Mycobacterium paratuberculosis).